The chain runs to 142 residues: Large ribosomal subunit protein bL27m (142 aa).

The disordered stretch occupies residues 27-48; it reads TKKSAGSTKNGRTSQPKNLGLK. Residues 30–43 show a composition bias toward polar residues; sequence SAGSTKNGRTSQPK.

The protein belongs to the bacterial ribosomal protein bL27 family.

It localises to the mitochondrion. The sequence is that of Large ribosomal subunit protein bL27m (mrpl27) from Dictyostelium discoideum (Social amoeba).